Consider the following 411-residue polypeptide: Citrate synthase (411 aa).

Residues H304 and D363 contribute to the active site.

This sequence belongs to the citrate synthase family.

It catalyses the reaction oxaloacetate + acetyl-CoA + H2O = citrate + CoA + H(+). The protein operates within carbohydrate metabolism; tricarboxylic acid cycle; isocitrate from oxaloacetate: step 1/2. The chain is Citrate synthase (gltA) from Rickettsia australis.